The sequence spans 89 residues: Large ribosomal subunit protein bL27 (89 aa).

Residues 1 to 21 (MAHKKAGGSSRNGRDSAGRRL) are disordered.

Belongs to the bacterial ribosomal protein bL27 family.

In Novosphingobium aromaticivorans (strain ATCC 700278 / DSM 12444 / CCUG 56034 / CIP 105152 / NBRC 16084 / F199), this protein is Large ribosomal subunit protein bL27.